The chain runs to 148 residues: MGANVSTPDQRFQVTHFRSTKPWTPRPEIYPFKVNSPCIVEIKNMNQWKSRLNALKDTNKLLVIEFTAKWCGPCKTLEPKLEELAAKYTDVEFVKIDVDVLMSVWMEFNLSTLPAIVFMKRGREVDMVVGVKVDELERKLNKYTQSFF.

Residues 1–145 (MGANVSTPDQ…LERKLNKYTQ (145 aa)) form the Thioredoxin domain. Active-site nucleophile residues include Cys-71 and Cys-74. Cys-71 and Cys-74 form a disulfide bridge.

This sequence belongs to the thioredoxin family. Plant H-type subfamily.

The protein localises to the cytoplasm. Probable thiol-disulfide oxidoreductase that may be involved in the redox regulation of a number of cytosolic enzymes. This chain is Thioredoxin H8 (TRX8), found in Arabidopsis thaliana (Mouse-ear cress).